The following is a 492-amino-acid chain: Alpha/beta hydrolase ucsC (492 aa).

Ser258 (nucleophile) is an active-site residue.

The protein belongs to the AB hydrolase superfamily. FUS2 hydrolase family. In terms of assembly, homodimer.

The protein operates within mycotoxin biosynthesis. Alpha/beta hydrolase; part of the gene cluster that mediates the biosynthesis of UCS1025A, a member of the pyrrolizidinone family that acts as a strong telomerase inhibitor and displays potent antibacterial and antitumor properties. These compounds share a hemiaminal-containing pyrrolizidinone core fused with a gamma-lactone, giving a furopyrrolizidine that is connected to a decalin fragment. The polyketide synthase module (PKS) of the PKS-NRPS ucsA is responsible for the synthesis of the polyketide backbone via the condensation of an acetyl-CoA starter unit with 6 malonyl-CoA units. The downstream nonribosomal peptide synthetase (NRPS) module then amidates the carboxyl end of the polyketide with a 2S,3S-methylproline derived from L-isoleucine by the 2-oxoglutarate-dependent dioxygenase ucsF which converts L-isoleucine to (4S,5S)-4-methylpyrroline-5-carboxylate that is further converted to 2S,3S-methylproline by the pyrroline-5-carboxylate reductase ucsG. Reductive release of the completed aminoacyl polyketide from the assembly line can form the 3-pyrrolin-2-one structure via an intramolecular Knoevenagel reaction. Because ucsA lacks a designated enoylreductase (ER) domain, the required activity is provided the enoyl reductase ucsL. This keto acyclic precursor is the substrate of the Diels-Alderase ucsH, that catalyzes the Diels-Alder cycloaddition. Oxidation of the 3S-methyl group to a carboxylate by the cytochrome P450 monooxygenase ucsK allows an oxa-Michael cyclization that might involve the reductase/dehydrogenase ucsI and which furnishes the furopyrrolizidine. The oxidase ucsJ likely plays a critical role in stereoselective reduction of the C5-C6 double bond to afford the required R-configured carboxylate group. Further enolization and oxidation at C5 by an unidentified enzyme affords the last intermediate that can undergo oxa-Michael cyclization to yield UCS1025A. The chain is Alpha/beta hydrolase ucsC from Acremonium sp.